The following is a 52-amino-acid chain: UPF0057 membrane protein PA0567 (52 aa).

Helical transmembrane passes span 6–26 and 29–49; these read ILIA…FGGA and LNIL…VYII.

Belongs to the UPF0057 (PMP3) family.

It is found in the cell membrane. The chain is UPF0057 membrane protein PA0567 from Pseudomonas aeruginosa (strain ATCC 15692 / DSM 22644 / CIP 104116 / JCM 14847 / LMG 12228 / 1C / PRS 101 / PAO1).